The chain runs to 138 residues: Putative pre-16S rRNA nuclease (138 aa).

It belongs to the YqgF nuclease family.

The protein resides in the cytoplasm. Its function is as follows. Could be a nuclease involved in processing of the 5'-end of pre-16S rRNA. This chain is Putative pre-16S rRNA nuclease, found in Escherichia coli O157:H7.